Consider the following 75-residue polypeptide: Small ribosomal subunit protein bS18 (75 aa).

The protein belongs to the bacterial ribosomal protein bS18 family. As to quaternary structure, part of the 30S ribosomal subunit. Forms a tight heterodimer with protein bS6.

Binds as a heterodimer with protein bS6 to the central domain of the 16S rRNA, where it helps stabilize the platform of the 30S subunit. This Shewanella halifaxensis (strain HAW-EB4) protein is Small ribosomal subunit protein bS18.